We begin with the raw amino-acid sequence, 70 residues long: ATP synthase subunit c (70 aa).

Transmembrane regions (helical) follow at residues Ile4–Ile24 and Ile45–Phe65.

It belongs to the ATPase C chain family. As to quaternary structure, F-type ATPases have 2 components, F(1) - the catalytic core - and F(0) - the membrane proton channel. F(1) has five subunits: alpha(3), beta(3), gamma(1), delta(1), epsilon(1). F(0) has three main subunits: a(1), b(2) and c(10-14). The alpha and beta chains form an alternating ring which encloses part of the gamma chain. F(1) is attached to F(0) by a central stalk formed by the gamma and epsilon chains, while a peripheral stalk is formed by the delta and b chains.

The protein resides in the cell membrane. Its function is as follows. F(1)F(0) ATP synthase produces ATP from ADP in the presence of a proton or sodium gradient. F-type ATPases consist of two structural domains, F(1) containing the extramembraneous catalytic core and F(0) containing the membrane proton channel, linked together by a central stalk and a peripheral stalk. During catalysis, ATP synthesis in the catalytic domain of F(1) is coupled via a rotary mechanism of the central stalk subunits to proton translocation. In terms of biological role, key component of the F(0) channel; it plays a direct role in translocation across the membrane. A homomeric c-ring of between 10-14 subunits forms the central stalk rotor element with the F(1) delta and epsilon subunits. In Staphylococcus aureus (strain Mu3 / ATCC 700698), this protein is ATP synthase subunit c.